Consider the following 339-residue polypeptide: Sulfate/thiosulfate import ATP-binding protein CysA (339 aa).

The 235-residue stretch at 3–237 (IAIRSVEKQF…PETAFVCGFV (235 aa)) folds into the ABC transporter domain. 35–42 (GPSGSGKT) serves as a coordination point for ATP.

Belongs to the ABC transporter superfamily. Sulfate/tungstate importer (TC 3.A.1.6) family. As to quaternary structure, the complex is composed of two ATP-binding proteins (CysA), two transmembrane proteins (CysT and CysW) and a solute-binding protein (CysP).

Its subcellular location is the cell inner membrane. It catalyses the reaction sulfate(out) + ATP + H2O = sulfate(in) + ADP + phosphate + H(+). The catalysed reaction is thiosulfate(out) + ATP + H2O = thiosulfate(in) + ADP + phosphate + H(+). Functionally, part of the ABC transporter complex CysAWTP involved in sulfate/thiosulfate import. Responsible for energy coupling to the transport system. The chain is Sulfate/thiosulfate import ATP-binding protein CysA from Caulobacter vibrioides (strain ATCC 19089 / CIP 103742 / CB 15) (Caulobacter crescentus).